A 198-amino-acid chain; its full sequence is Large ribosomal subunit protein bL25 (198 aa).

It belongs to the bacterial ribosomal protein bL25 family. CTC subfamily. In terms of assembly, part of the 50S ribosomal subunit; part of the 5S rRNA/L5/L18/L25 subcomplex. Contacts the 5S rRNA. Binds to the 5S rRNA independently of L5 and L18.

This is one of the proteins that binds to the 5S RNA in the ribosome where it forms part of the central protuberance. The chain is Large ribosomal subunit protein bL25 from Pseudomonas putida (strain W619).